We begin with the raw amino-acid sequence, 185 residues long: Translation initiation factor IF-3 (185 aa).

The protein belongs to the IF-3 family. Monomer.

The protein localises to the cytoplasm. IF-3 binds to the 30S ribosomal subunit and shifts the equilibrium between 70S ribosomes and their 50S and 30S subunits in favor of the free subunits, thus enhancing the availability of 30S subunits on which protein synthesis initiation begins. The chain is Translation initiation factor IF-3 from Bacteroides thetaiotaomicron (strain ATCC 29148 / DSM 2079 / JCM 5827 / CCUG 10774 / NCTC 10582 / VPI-5482 / E50).